The primary structure comprises 847 residues: Leucine--tRNA ligase (847 aa).

Positions proline 43 to histidine 53 match the 'HIGH' region motif. The short motif at lysine 607–serine 611 is the 'KMSKS' region element. Lysine 610 contacts ATP.

The protein belongs to the class-I aminoacyl-tRNA synthetase family.

It localises to the cytoplasm. The catalysed reaction is tRNA(Leu) + L-leucine + ATP = L-leucyl-tRNA(Leu) + AMP + diphosphate. This chain is Leucine--tRNA ligase, found in Buchnera aphidicola subsp. Cinara cedri (strain Cc).